A 392-amino-acid chain; its full sequence is Streptogrisin-D (392 aa).

Positions 1-64 (MCVSRRRNSG…AGFTFQTANA (64 aa)) are cleaved as a signal peptide. Residues 65-204 (SDDVPAFGAK…NRTAGEFTPL (140 aa)) constitute a propeptide that is removed on maturation. A disulfide bridge connects residues C218 and C238. Active-site charge relay system residues include H237, D266, and S348. A disulfide bridge connects residues C342 and C369.

Belongs to the peptidase S1 family. As to quaternary structure, homodimer.

Has a primary specificity for large aliphatic or aromatic amino acids. The protein is Streptogrisin-D (sprD) of Streptomyces griseus.